A 547-amino-acid polypeptide reads, in one-letter code: Glucocorticoid-induced transcript 1 protein (547 aa).

Over residues 1–13 (MSTASSSSSSSSS) the composition is skewed to low complexity. 2 disordered regions span residues 1–55 (MSTA…APAA) and 72–285 (LLRG…LSNI). Ser-20 is subject to Phosphoserine. Low complexity predominate over residues 26-38 (SAAGSPPAVAAAG). Over residues 39–50 (SGNGAGGGGGVG) the composition is skewed to gly residues. Phosphoserine is present on residues Ser-79, Ser-105, Ser-107, and Ser-108. A compositionally biased stretch (low complexity) spans 86–105 (AAAAASLGSLPGPGAARGPS). Position 110 is a phosphothreonine (Thr-110). Basic and acidic residues predominate over residues 130-145 (RSPESHRRSSSPERRS). Low complexity predominate over residues 162–177 (RTSSTIRRTSSLDTIT). 2 positions are modified to phosphoserine: Ser-171 and Ser-172. A phosphothreonine mark is found at Thr-175 and Thr-177. Positions 187–201 (RDPHVHYPSCMKDKA) are enriched in basic and acidic residues. Position 223 is a phosphoserine (Ser-223). The stretch at 225–254 (GSADQLKEQIAKLRQQLQRSKQSSRHSKEK) forms a coiled coil. Residues 236–245 (KLRQQLQRSK) are compositionally biased toward low complexity. Phosphoserine is present on Ser-258. A compositionally biased stretch (polar residues) spans 265–276 (ITISHTQATGSR). Phosphothreonine is present on Thr-266. Ser-303 carries the post-translational modification Phosphoserine. Over residues 319–331 (EVSKPLDIPDGRR) the composition is skewed to basic and acidic residues. Residues 319 to 417 (EVSKPLDIPD…KPNNSYMFKR (99 aa)) are disordered. Over residues 339–356 (RSSSTRSIDTQTPSVQER) the composition is skewed to polar residues. Position 343 is a phosphothreonine (Thr-343). Residue Ser-345 is modified to Phosphoserine. Thr-350 carries the phosphothreonine modification. Residues 357 to 369 (SSSCSSHSPCVSP) are compositionally biased toward low complexity. Phosphoserine occurs at positions 394, 398, 406, 412, and 480. The segment covering 505–520 (SLSDDTSTAGSMEASV) has biased composition (polar residues). Positions 505-530 (SLSDDTSTAGSMEASVQQPSQQQQLL) are disordered. The segment covering 521–530 (QQPSQQQQLL) has biased composition (low complexity).

Predominantly expressed in lung, spleen, thymus and testis and, at lower levels, in brain, bone marrow, peripheral leukocytes, skin and trachea.

In Homo sapiens (Human), this protein is Glucocorticoid-induced transcript 1 protein (GLCCI1).